Consider the following 97-residue polypeptide: uncharacterized protein (97 aa).

3 consecutive transmembrane segments (helical) span residues 5–25 (TLVA…SLSV), 27–47 (MVFV…LICY), and 77–97 (IISI…VFIL).

It is found in the membrane. This is an uncharacterized protein from Saccharomyces cerevisiae (strain ATCC 204508 / S288c) (Baker's yeast).